Consider the following 380-residue polypeptide: Chorismate synthase (380 aa).

Arginine 48 contributes to the NADP(+) binding site. FMN-binding positions include 126-128 (HFS), glycine 300, 315-319 (KPISS), and arginine 342.

It belongs to the chorismate synthase family. In terms of assembly, homotetramer. Requires FMNH2 as cofactor.

The catalysed reaction is 5-O-(1-carboxyvinyl)-3-phosphoshikimate = chorismate + phosphate. It participates in metabolic intermediate biosynthesis; chorismate biosynthesis; chorismate from D-erythrose 4-phosphate and phosphoenolpyruvate: step 7/7. Catalyzes the anti-1,4-elimination of the C-3 phosphate and the C-6 proR hydrogen from 5-enolpyruvylshikimate-3-phosphate (EPSP) to yield chorismate, which is the branch point compound that serves as the starting substrate for the three terminal pathways of aromatic amino acid biosynthesis. This reaction introduces a second double bond into the aromatic ring system. In Lancefieldella parvula (strain ATCC 33793 / DSM 20469 / CCUG 32760 / JCM 10300 / KCTC 3663 / VPI 0546 / 1246) (Atopobium parvulum), this protein is Chorismate synthase.